The chain runs to 250 residues: 3-deoxy-manno-octulosonate cytidylyltransferase (250 aa).

Belongs to the KdsB family.

Its subcellular location is the cytoplasm. It catalyses the reaction 3-deoxy-alpha-D-manno-oct-2-ulosonate + CTP = CMP-3-deoxy-beta-D-manno-octulosonate + diphosphate. It participates in nucleotide-sugar biosynthesis; CMP-3-deoxy-D-manno-octulosonate biosynthesis; CMP-3-deoxy-D-manno-octulosonate from 3-deoxy-D-manno-octulosonate and CTP: step 1/1. Its pathway is bacterial outer membrane biogenesis; lipopolysaccharide biosynthesis. In terms of biological role, activates KDO (a required 8-carbon sugar) for incorporation into bacterial lipopolysaccharide in Gram-negative bacteria. This Francisella tularensis subsp. tularensis (strain FSC 198) protein is 3-deoxy-manno-octulosonate cytidylyltransferase.